Reading from the N-terminus, the 515-residue chain is UPF0053 protein BUsg_314 (515 aa).

The next 7 helical transmembrane spans lie at 14 to 34 (LTLV…VAIL), 49 to 69 (IGLG…SWVV), 79 to 99 (NFFS…FLLF), 125 to 145 (FWAV…DAII), 150 to 170 (MVNQ…LMLL), 185 to 205 (VVVL…AEAL), and 207 to 227 (FYIP…IEIF). 2 CBS domains span residues 309 to 368 (MTPR…NIDV) and 372 to 432 (ASQI…DADE).

This sequence belongs to the UPF0053 family.

The protein localises to the cell membrane. The chain is UPF0053 protein BUsg_314 from Buchnera aphidicola subsp. Schizaphis graminum (strain Sg).